A 197-amino-acid chain; its full sequence is 3-isopropylmalate dehydratase small subunit (197 aa).

This sequence belongs to the LeuD family. LeuD type 1 subfamily. Heterodimer of LeuC and LeuD.

The catalysed reaction is (2R,3S)-3-isopropylmalate = (2S)-2-isopropylmalate. It participates in amino-acid biosynthesis; L-leucine biosynthesis; L-leucine from 3-methyl-2-oxobutanoate: step 2/4. Functionally, catalyzes the isomerization between 2-isopropylmalate and 3-isopropylmalate, via the formation of 2-isopropylmaleate. The chain is 3-isopropylmalate dehydratase small subunit from Geobacillus kaustophilus (strain HTA426).